A 438-amino-acid chain; its full sequence is Alpha-methylserine aldolase (438 aa).

At K252 the chain carries N6-(pyridoxal phosphate)lysine.

Belongs to the SHMT family. Alpha-methylserine aldolase subfamily. As to quaternary structure, homodimer. Requires pyridoxal 5'-phosphate as cofactor.

It carries out the reaction 2-methyl-L-serine = formaldehyde + L-alanine. In the alpha-methyl-L-serine synthesis reaction, activity is inhibited by an excess amount of formaldehyde (at a concentration greater than 10 mM). Functionally, catalyzes the reversible interconversion of alpha-methyl-L-serine to L-alanine and formaldehyde. Cannot use alpha-methyl-D-serine, L-serine or D-serine. Cannot use D-alanine instead of L-alanine as the substrate for alpha-methyl-L-serine synthesis. Does not require tetrahydrofolate (THF) for activity. This Ralstonia sp protein is Alpha-methylserine aldolase.